We begin with the raw amino-acid sequence, 281 residues long: UPF0273 protein PAE3143 (281 aa).

Residues 4-248 form the KaiC domain; it reads PRVRSYVPGL…YIKITGSSVR (245 aa). Residue 31–38 participates in ATP binding; it reads GGPGTGKS.

The protein belongs to the UPF0273 family.

The polypeptide is UPF0273 protein PAE3143 (Pyrobaculum aerophilum (strain ATCC 51768 / DSM 7523 / JCM 9630 / CIP 104966 / NBRC 100827 / IM2)).